The primary structure comprises 196 residues: Pycsar effector protein GmPycTM (196 aa).

3 consecutive transmembrane segments (helical) span residues 34–54 (ISFS…SGII), 82–102 (ITTI…TYLF), and 176–196 (VNWL…FLFL).

The protein localises to the cell inner membrane. Pycsar (pyrimidine cyclase system for antiphage resistance) provides immunity against bacteriophage. The pyrimidine cyclase (PycC) synthesizes cyclic nucleotides in response to infection; these serve as specific second messenger signals. The signals activate the adjacent effector, leading to bacterial cell death and abortive phage infection. A clade C Pycsar system. Functionally, the effector gene of a two-gene Pycsar system. Expression of this and adjacent uridylate cyclase GmPycC (AC P0DV42) probably confers resistance to bacteriophage. The genes are probably only expressed in response to bacteriophage infection. Probably only responds to cUMP (produced by its cognate NTP cyclase), acts by impairing membrane integrity. This chain is Pycsar effector protein GmPycTM, found in Gulbenkiania mobilis.